The primary structure comprises 479 residues: DNA polymerase IV (479 aa).

The UmuC domain maps to 7 to 189; that stretch reads ILHLDMDAFF…MTVRTLPGVG (183 aa). Positions 11 and 105 each coordinate Mg(2+). The active site involves E106. Disordered regions lie at residues 357 to 400 and 430 to 479; these read AGDR…GHGW and DPEL…TSRP. Residues 381–396 are compositionally biased toward basic and acidic residues; it reads AERRWPSGHDVRHTEL.

It belongs to the DNA polymerase type-Y family. Monomer. Mg(2+) is required as a cofactor.

The protein resides in the cytoplasm. The catalysed reaction is DNA(n) + a 2'-deoxyribonucleoside 5'-triphosphate = DNA(n+1) + diphosphate. Functionally, poorly processive, error-prone DNA polymerase involved in untargeted mutagenesis. Copies undamaged DNA at stalled replication forks, which arise in vivo from mismatched or misaligned primer ends. These misaligned primers can be extended by PolIV. Exhibits no 3'-5' exonuclease (proofreading) activity. May be involved in translesional synthesis, in conjunction with the beta clamp from PolIII. The protein is DNA polymerase IV of Streptomyces coelicolor (strain ATCC BAA-471 / A3(2) / M145).